Here is a 249-residue protein sequence, read N- to C-terminus: Undecaprenyl-diphosphatase (249 aa).

8 consecutive transmembrane segments (helical) span residues glycine 11–phenylalanine 31, proline 35–valine 55, leucine 80–serine 100, valine 101–leucine 121, isoleucine 135–isoleucine 155, phenylalanine 180–phenylalanine 200, threonine 202–valine 222, and valine 226–leucine 246.

This sequence belongs to the UppP family.

It localises to the cell membrane. It catalyses the reaction di-trans,octa-cis-undecaprenyl diphosphate + H2O = di-trans,octa-cis-undecaprenyl phosphate + phosphate + H(+). In terms of biological role, catalyzes the dephosphorylation of undecaprenyl diphosphate (UPP). This Methanococcus maripaludis (strain C6 / ATCC BAA-1332) protein is Undecaprenyl-diphosphatase.